A 229-amino-acid chain; its full sequence is Prolactin (229 aa).

The first 30 residues, 1–30 (MDSKGSSQKGSRLLLLLVVSNLLLCQGVVS), serve as a signal peptide directing secretion. A disulfide bond links C34 and C41. Phosphoserine is present on residues S56, S64, and S120. 2 disulfides stabilise this stretch: C88-C204 and C221-C229.

This sequence belongs to the somatotropin/prolactin family. As to quaternary structure, interacts with PRLR.

It localises to the secreted. Its function is as follows. Prolactin acts primarily on the mammary gland by promoting lactation. The chain is Prolactin (PRL) from Bos taurus (Bovine).